Here is a 131-residue protein sequence, read N- to C-terminus: Large ribosomal subunit protein bL17 (131 aa).

The protein belongs to the bacterial ribosomal protein bL17 family. Part of the 50S ribosomal subunit. Contacts protein L32.

The chain is Large ribosomal subunit protein bL17 from Azoarcus sp. (strain BH72).